A 2647-amino-acid chain; its full sequence is Filamin-A (2647 aa).

The segment at 1–37 is disordered; it reads MSSSHSRCGQSAAVASPGGSIDSRDAEMPATEKDLAE. Ser-2 bears the N-acetylserine mark. The interval 2 to 274 is actin-binding; that stretch reads SSSHSRCGQS…PKAKLKPGAP (273 aa). Residues Ser-11, Ser-16, and Ser-20 each carry the phosphoserine modification. Basic and acidic residues predominate over residues 22–37; it reads DSRDAEMPATEKDLAE. Glycyl lysine isopeptide (Lys-Gly) (interchain with G-Cter in ubiquitin) cross-links involve residues Lys-42, Lys-43, and Lys-135. Calponin-homology (CH) domains are found at residues 43-149 and 166-269; these read KIQQ…LHYS and QTPK…KAKL. Residues 271–294 form a disordered region; sequence PGAPLRPKLNPKKARAYGPGIEPT. Filamin repeat units lie at residues 276 to 374, 376 to 474, 475 to 570, 571 to 663, 667 to 763, 764 to 866, 867 to 965, 966 to 1061, 1062 to 1154, 1155 to 1249, 1250 to 1349, 1350 to 1442, 1443 to 1539, 1540 to 1636, and 1641 to 1740; these read RPKL…EVYV, KSQG…TVTV, GQAC…EVKV, GTEC…MADI, PQDF…RVNV, GAGS…RVKV, EPSH…SVGV, SPSL…PLEA, VAPT…KAHV, APCF…KLQV, EPAV…QVPV, TEGC…KVPV, HDVT…KVKV, LPTH…RVRA, and DASK…QVTA. Residue Lys-299 forms a Glycyl lysine isopeptide (Lys-Gly) (interchain with G-Cter in SUMO1); alternate linkage. Residue Lys-299 forms a Glycyl lysine isopeptide (Lys-Gly) (interchain with G-Cter in SUMO2); alternate linkage. N6-acetyllysine is present on residues Lys-376 and Lys-508. Lys-700, Lys-781, Lys-837, Lys-865, and Lys-906 each carry N6-acetyllysine. Ser-968 and Ser-1055 each carry phosphoserine. The residue at position 1071 (Lys-1071) is an N6-acetyllysine; alternate. An N6-succinyllysine; alternate modification is found at Lys-1071. Ser-1084 is modified (phosphoserine). Thr-1089 carries the post-translational modification Phosphothreonine. 2 positions are modified to phosphoserine: Ser-1301 and Ser-1338. Residue Lys-1372 is modified to N6-acetyllysine. A phosphoserine mark is found at Ser-1459 and Ser-1533. The interaction with furin stretch occupies residues 1490–1607; it reads PKGLVEPVDV…DNHDGTYTVA (118 aa). At Lys-1538 the chain carries N6-acetyllysine. Ser-1630 and Ser-1734 each carry phosphoserine. The hinge 1 stretch occupies residues 1741-1778; sequence LAGDQPTVQTPLRSQQLAPQYNYPQGSQQTWIPERPMV. Residue Thr-1750 is modified to Phosphothreonine. Filamin repeat units lie at residues 1765-1860, 1861-1952, 1953-2039, 2042-2134, 2135-2230, 2233-2325, 2327-2420, and 2424-2516; these read QGSQ…QFYV, DYVN…TARV, TGDD…PVVI, SEIG…SVKV, TGEG…QFTV, LGEG…VVPV, SPSG…KIRV, and GHGG…KAKV. Ser-1835 is subject to Phosphoserine. Ser-1967, Ser-2053, Ser-2128, Ser-2152, Ser-2158, Ser-2163, Ser-2180, Ser-2284, Ser-2327, and Ser-2329 each carry phosphoserine. Thr-2336 carries the phosphothreonine modification. Residues Ser-2338, Ser-2370, Ser-2414, Ser-2510, Ser-2523, and Ser-2526 each carry the phosphoserine modification. Positions 2517–2553 are hinge 2; the sequence is TGPRLVSNHSLHETSSVFVDSLTKVATVPQHATSGPG. The segment at 2517 to 2647 is self-association site, tail; it reads TGPRLVSNHS…PGSPYRIMVP (131 aa). Residues 2552–2646 form a Filamin 24 repeat; it reads PGPADVSKVV…IPGSPYRIMV (95 aa). Lys-2569 carries the post-translational modification N6-acetyllysine; alternate. Lys-2569 is modified (N6-succinyllysine; alternate). An N6-acetyllysine modification is found at Lys-2575. Phosphothreonine is present on Thr-2599. Residues Lys-2607 and Lys-2621 each carry the N6-acetyllysine modification.

Belongs to the filamin family. In terms of assembly, homodimer. Interacts with FCGR1A, FLNB, FURIN, HSPB7, KCND2, INPPL1, MYOT, MYOZ1, PDLIM2, ARHGAP24, PSEN1, PSEN2 and ECSCR. Also interacts with various other binding partners in addition to filamentous actin. Interacts (via N-terminus) with TAF1B. Interacts (via N-terminus) with MIS18BP1 (via N-terminus). Interacts with TMEM67 (via C-terminus) and MKS1. Interacts (via actin-binding domain) with MICALL2 (via calponin-homology (CH) domain). Interacts with RFLNA and RFLNB. Interacts (via filamin repeat 5) with SYK; docks SYK to the plasma membrane. Interacts (via filamin repeats 19 and 21) with DRD3; increased PKA-mediated phosphorylation at Ser-2152. Interacts (via filamin repeat 21) with MAS1, AGTR1 and ADRA1D; increases PKA-mediated phosphorylation of FLNA at Ser-2152. Interacts (via filamin repeats 4, 9, 12, 17, 19, 21, and 23) with GP1BA (high affinity), ITGB7, ITGB2 and FBLIM1. Interacts with CEACAM1 (via cytoplasmic domain); inhibits cell migration and cell scattering by interfering with the interaction between FLNA and RALA. Interacts with FOXC1. Interacts (via calponin-homology (CH) domain 1 and filamin repeat 24) with CRMP1; the interaction alters FLNA ternary structure and thus promotes FLNA dissociation from F-actin. Interacts with DPYSL3/CRMP3 and DPYSL4/CRMP4. Post-translationally, phosphorylation at Ser-2152 is negatively regulated by the autoinhibited conformation of filamin repeats 19-21. Ligand binding induces a conformational switch triggering phosphorylation at Ser-2152 by PKA. In terms of processing, polyubiquitination in the CH1 domain by a SCF-like complex containing ASB2 leads to proteasomal degradation. Prior dissociation from actin may be required to expose the target lysines. Ubiquitinated in endothelial cells by RNF213 downstream of the non-canonical Wnt signaling pathway, leading to its degradation by the proteasome. Widely expressed. Highly expressed in Purkinje cells.

The protein resides in the cytoplasm. It is found in the cell cortex. Its subcellular location is the cytoskeleton. It localises to the perikaryon. The protein localises to the cell projection. The protein resides in the growth cone. It is found in the podosome. Actin binding protein that promotes orthogonal branching of actin filaments and links actin filaments to membrane glycoproteins. Anchors various transmembrane proteins to the actin cytoskeleton and serves as a scaffold for a wide range of cytoplasmic signaling proteins. Interaction with FLNB may allow neuroblast migration from the ventricular zone into the cortical plate. Tethers cell surface-localized furin, modulates its rate of internalization and directs its intracellular trafficking. Involved in ciliogenesis. Plays a role in cell-cell contacts and adherens junctions during the development of blood vessels, heart and brain organs. Plays a role in platelets morphology through interaction with SYK that regulates ITAM- and ITAM-like-containing receptor signaling, resulting in by platelet cytoskeleton organization maintenance. During the axon guidance process, required for growth cone collapse induced by SEMA3A-mediated stimulation of neurons. The sequence is that of Filamin-A (Flna) from Mus musculus (Mouse).